The sequence spans 619 residues: (-)-camphene synthase, chloroplastic (619 aa).

Residues 1–47 (MALVSVAPLVSMRRSLFSSPYELKSIDKTIPNLVMCRKRMSGTPSIR) constitute a chloroplast transit peptide. Positions 370, 374, and 522 each coordinate Mg(2+). A DDXXD motif motif is present at residues 370–374 (DDIYD).

It belongs to the terpene synthase family. Tpsd subfamily. Requires Mg(2+) as cofactor. Mn(2+) is required as a cofactor.

Its subcellular location is the plastid. It is found in the chloroplast. It catalyses the reaction (2E)-geranyl diphosphate = (1S,4R)-camphene + diphosphate. It carries out the reaction (2E)-geranyl diphosphate = (1R,5R)-alpha-pinene + diphosphate. The catalysed reaction is (2E)-geranyl diphosphate = tricyclene + diphosphate. The enzyme catalyses (2E)-geranyl diphosphate = beta-myrcene + diphosphate. It catalyses the reaction (2E)-geranyl diphosphate = (1S,5S)-beta-pinene + diphosphate. It carries out the reaction (2E)-geranyl diphosphate = (1S,5S)-alpha-pinene + diphosphate. The protein operates within terpene metabolism; oleoresin biosynthesis. Its pathway is secondary metabolite biosynthesis; terpenoid biosynthesis. Its function is as follows. Monoterpene synthase (TPS) involved in the biosynthesis of monoterpene natural products included in conifer oleoresin secretions and volatile emissions; these compounds contribute to biotic and abiotic stress defense against herbivores and pathogens. Catalyzes the conversion of (2E)-geranyl diphosphate (GPP) to (-)-camphene, (+)-alpha-pinene and (-)-alpha-pinene, and, to a lower extent, to tricyclene, myrcene and (-)-beta-pinene. In Pinus contorta (Shore pine), this protein is (-)-camphene synthase, chloroplastic.